Reading from the N-terminus, the 350-residue chain is Ferredoxin--NADP reductase (350 aa).

FAD-binding residues include Thr-22, Glu-41, Gln-49, Tyr-54, Val-94, Phe-129, Asp-295, and Ser-336.

It belongs to the ferredoxin--NADP reductase type 2 family. As to quaternary structure, homodimer. Requires FAD as cofactor.

It catalyses the reaction 2 reduced [2Fe-2S]-[ferredoxin] + NADP(+) + H(+) = 2 oxidized [2Fe-2S]-[ferredoxin] + NADPH. The polypeptide is Ferredoxin--NADP reductase (Chlorobium luteolum (strain DSM 273 / BCRC 81028 / 2530) (Pelodictyon luteolum)).